A 107-amino-acid polypeptide reads, in one-letter code: Integration host factor subunit alpha (107 aa).

It belongs to the bacterial histone-like protein family. Heterodimer of an alpha and a beta chain.

Functionally, this protein is one of the two subunits of integration host factor, a specific DNA-binding protein that functions in genetic recombination as well as in transcriptional and translational control. This is Integration host factor subunit alpha from Mesorhizobium japonicum (strain LMG 29417 / CECT 9101 / MAFF 303099) (Mesorhizobium loti (strain MAFF 303099)).